An 868-amino-acid chain; its full sequence is Pentatricopeptide repeat-containing protein At2g27610 (868 aa).

PPR repeat units follow at residues 57–91 (DRES…GMEM), 92–126 (DCSI…GFLD), 127–157 (DVSV…MKER), 158–192 (NVVT…GTQP), 193–227 (NSFT…GLDK), 228–258 (TIPV…TEVK), 259–293 (SVVT…YVRL), 294–328 (SESS…GFLF), 329–359 (DQNI…IGCV), 361–395 (NVVS…GVRP), 396–426 (NEFT…NYER), 427–457 (SSTV…IDDK), 458–492 (DIVA…GIKP), 493–528 (NEFT…RLDS), 529–559 (SLCV…QREK), 560–594 (DLVS…KVKM), 595–625 (DGVT…MVRD), and 631–661 (TKEH…MPNP). The type E motif stretch occupies residues 666–741 (IWRTILAACR…EPGYSWIEVK (76 aa)). The segment at 742 to 772 (NKTYSFLAGDRSHPLKDQIYMKLEDLSTRLK) is type E(+) motif. Residues 773-868 (DLGYEPDTSY…DGVCSCGDFW (96 aa)) are type DYW motif.

This sequence belongs to the PPR family. PCMP-H subfamily.

The protein is Pentatricopeptide repeat-containing protein At2g27610 (PCMP-H60) of Arabidopsis thaliana (Mouse-ear cress).